Consider the following 394-residue polypeptide: Salivary plasminogen activator gamma (394 aa).

Positions 1 to 36 are cleaved as a signal peptide; sequence MVNTMKTKLLCVLLLCGAVFSLPRQETYRQLARGSR. The Kringle domain occupies 45 to 126; it reads CYKDQGVTYR…TSESCSVPVC (82 aa). 9 cysteine pairs are disulfide-bonded: Cys-45/Cys-126, Cys-66/Cys-108, Cys-97/Cys-121, Cys-131/Cys-262, Cys-174/Cys-190, Cys-182/Cys-251, Cys-276/Cys-351, Cys-308/Cys-324, and Cys-341/Cys-369. The Peptidase S1 domain occupies 143-393; it reads STGGLFTDIT…YLGWIRDNMR (251 aa). Residues His-189 and Asp-238 each act as charge relay system in the active site. The N-linked (GlcNAc...) asparagine glycan is linked to Asn-315. Ser-345 functions as the Charge relay system in the catalytic mechanism.

This sequence belongs to the peptidase S1 family. In terms of assembly, monomer.

The protein localises to the secreted. The catalysed reaction is Specific cleavage of Arg-|-Val bond in plasminogen to form plasmin.. Its function is as follows. Probably essential to support the feeding habits of this exclusively haematophagous animal. Probable potent thrombolytic agent. The protein is Salivary plasminogen activator gamma of Desmodus rotundus (Vampire bat).